The sequence spans 501 residues: IQ domain-containing protein M (501 aa).

A compositionally biased stretch (basic and acidic residues) spans 237 to 247; it reads ERQPIKPEPKS. The disordered stretch occupies residues 237 to 262; that stretch reads ERQPIKPEPKSQPRIKGTPNKTDKLD. In terms of domain architecture, IQ spans 290–319; the sequence is LIRMVTVMQAHVRGWLERKRLQRVMTKALD.

The protein is IQ domain-containing protein M of Homo sapiens (Human).